Consider the following 302-residue polypeptide: Glutamate/aspartate import solute-binding protein (302 aa).

The signal sequence occupies residues 1–22 (MQLRKPATAILALALSAGLAQA).

This sequence belongs to the bacterial solute-binding protein 3 family. As to quaternary structure, the complex is composed of two ATP-binding proteins (GltL), two transmembrane proteins (GltJ and GltK) and a solute-binding protein (GltI).

It is found in the periplasm. In terms of biological role, part of the ABC transporter complex GltIJKL involved in glutamate and aspartate uptake. Binds to both glutamate and aspartate. The sequence is that of Glutamate/aspartate import solute-binding protein (gltI) from Escherichia coli (strain K12).